The primary structure comprises 765 residues: Protein transport protein Sec23A (765 aa).

Thr2 bears the N-acetylthreonine mark. The Zn(2+) site is built by Cys61, Cys66, Cys85, and Cys88. The residue at position 308 (Thr308) is a Phosphothreonine. The Gelsolin-like repeat unit spans residues 632–718 (PEPVLLDSSS…EHGGSQARFL (87 aa)).

The protein belongs to the SEC23/SEC24 family. SEC23 subfamily. In terms of assembly, COPII is composed of at least five proteins: the Sec23/24 complex, the Sec13/31 complex and Sar1. Interacts with SEC23IP. Interacts with HTR4. Interacts with SEC16A. Interacts with SLC6A4. Interacts (as part of the Sec23/24 complex) with SEC22B; recruits SEC22B into COPII-coated vesicles and allows the transport of this cargo from the endoplasmic reticulum to the Golgi. Interacts (via Gelsolin-like repeat) with MIA2 and MIA3; specifically involved in the transport of large cargos like the collagen COL7A1. Interacts with DDHD1. Interacts with TMEM39A. Interacts with SACM1L; this interaction is reduced in the absence of TMEM39A. Interacts with kinase FAM20C; transport of FAM20C from the endoplasmic reticulum to the Golgi is likely to be mediated by COPII vesicles. As to expression, high levels in brain and fibroblasts.

Its subcellular location is the cytoplasmic vesicle. It localises to the COPII-coated vesicle membrane. The protein localises to the endoplasmic reticulum membrane. The protein resides in the cytoplasm. It is found in the cytosol. In terms of biological role, component of the coat protein complex II (COPII) which promotes the formation of transport vesicles from the endoplasmic reticulum (ER). The coat has two main functions, the physical deformation of the endoplasmic reticulum membrane into vesicles and the selection of cargo molecules for their transport to the Golgi complex. Required for the translocation of insulin-induced glucose transporter SLC2A4/GLUT4 to the cell membrane. This is Protein transport protein Sec23A from Mus musculus (Mouse).